Consider the following 383-residue polypeptide: Lipoyl synthase, mitochondrial (383 aa).

Residues 25–34 (STPSLLQTLD) show a composition bias toward polar residues. A disordered region spans residues 25 to 44 (STPSLLQTLDPSVPSPPAAG). [4Fe-4S] cluster contacts are provided by C110, C115, C121, C141, C145, C148, and S357. The 221-residue stretch at 126–346 (ETGTATATIM…RALGVEMGFR (221 aa)) folds into the Radical SAM core domain.

The protein belongs to the radical SAM superfamily. Lipoyl synthase family. It depends on [4Fe-4S] cluster as a cofactor.

It is found in the mitochondrion. It catalyses the reaction [[Fe-S] cluster scaffold protein carrying a second [4Fe-4S](2+) cluster] + N(6)-octanoyl-L-lysyl-[protein] + 2 oxidized [2Fe-2S]-[ferredoxin] + 2 S-adenosyl-L-methionine + 4 H(+) = [[Fe-S] cluster scaffold protein] + N(6)-[(R)-dihydrolipoyl]-L-lysyl-[protein] + 4 Fe(3+) + 2 hydrogen sulfide + 2 5'-deoxyadenosine + 2 L-methionine + 2 reduced [2Fe-2S]-[ferredoxin]. Its pathway is protein modification; protein lipoylation via endogenous pathway; protein N(6)-(lipoyl)lysine from octanoyl-[acyl-carrier-protein]: step 2/2. In terms of biological role, catalyzes the radical-mediated insertion of two sulfur atoms into the C-6 and C-8 positions of the octanoyl moiety bound to the lipoyl domains of lipoate-dependent enzymes, thereby converting the octanoylated domains into lipoylated derivatives. This Zea mays (Maize) protein is Lipoyl synthase, mitochondrial.